The following is a 177-amino-acid chain: R-phycoerythrin beta chain (177 aa).

Phycourobilin is bound by residues Cys-50 and Cys-61. Position 72 is an N4-methylasparagine (Asn-72). The (2R,3E)-phycoerythrobilin site is built by Cys-82 and Cys-158.

This sequence belongs to the phycobiliprotein family. Heterodimer of an alpha and a beta chain. In terms of processing, contains two covalently linked phycoerythrobilin chromophores and one covalently linked phycourobilin chromophore.

The protein localises to the plastid. It is found in the chloroplast thylakoid membrane. Light-harvesting photosynthetic bile pigment-protein from the phycobiliprotein complex. The chain is R-phycoerythrin beta chain (cpeB) from Pyropia haitanensis (Red seaweed).